Here is a 654-residue protein sequence, read N- to C-terminus: MSLAAYCVICCRRIGSFAPRSKSRTPWRNIRNIIRFTGSLIVGGSLFITYEVLALKKSLMLDTQVVEREKMKSYIYVHKAPVDRLDNRGIVWQARKELHRAVRKLLAAAAKVLRSPFADSFSTVDIEDHDCAVWLLLRKSREDDLAARLQAVREMSEAHHWHDYQYRIIAQACDPRTLIGLARSKESDLRFFLPPPPLPSLKEDSSTEEELRHLLASLPQTELDECLQYFTSLALSESSQSLAAQKGGLWCFGGNGLPYAESFGKVPSATVEMFCLEAIVKHSEIPSHCDHIEAGGGLQLLQRLYQLHKDCPKVQRNVMRIIGNMALNEHLHPAIVHSGWVSLMAEALKSSHIMEASHAARTLANLDRETVGEKYQDGVYVLHPQCRTSQPIKADVLFIHGLMGAAFKTWRQHDSQRALTESAVVDEDRYTTCWPKTWLAKDCPSLRIISVEYDTSLSDWRARCPMERKSIAFRSNELLSKLRAAGVGDRPMIWISHSMGGLLVKKMLLEASKKPELNALINNTRGIIFYSVPHHGSRLAEYSVNIRYLLFPSLEVKELSKDSPALKTLQDDFLEFAKDKNFQVLNFVETQPTFIGSMIKLHVVPVESADLGIGDLIPVDVNHLNICKPKTKDAFLYQRTLQFICETLARDLEN.

Residues 32–54 (NIIRFTGSLIVGGSLFITYEVLA) form a helical membrane-spanning segment.

The protein belongs to the SERAC1 family. In terms of tissue distribution, testis. Higher expression at both mRNA and protein levels in brain and skeletal muscles, than in other organs.

It localises to the mitochondrion membrane. The protein resides in the endoplasmic reticulum. It is found in the mitochondrion. In terms of biological role, facilitates the transport of serine from the cytosol to the mitochondria by interacting with and stabilizing Sideroflexin-1 (SFXN1), a mitochondrial serine transporter, playing a fundamental role in the one-carbon cycle responsible for the synthesis of nucleotides needed for mitochondrial DNA replication. Plays an important role in the phosphatidylglycerol (PG) remodeling that is essential for both mitochondrial function and intracellular cholesterol trafficking. Specifically involved in the exchange of the sn-1 acyl chain from PG 16:0/18:1(9Z) (also known as 1-hexadecanoyl-2-(9Z-octadecenoyl)-sn-glycero-3-phospho-(1'-sn-glycerol)) to PG 18:0/18:1(9Z) (also known as 1-octadecanoyl-2-(9Z-octadecenoyl)-sn-glycero-3-phospho-(1'-sn-glycerol)), a step needed in the bis(monoacylglycerol)phosphate biosynthetic pathway. May have acyltransferase activity although the mechanism for PG remodeling has not been determined. The polypeptide is Protein SERAC1 (Serac1) (Mus musculus (Mouse)).